A 310-amino-acid chain; its full sequence is Vomeronasal type-1 receptor 50 (310 aa).

The Extracellular segment spans residues 1–16; the sequence is MSKANLLHTDNNMKIT. The helical transmembrane segment at 17–37 threads the bilayer; sequence LFSEVSVGISANSILFVVHLC. Over 38 to 50 the chain is Cytoplasmic; the sequence is KLLHENKPKPIDL. A helical transmembrane segment spans residues 51–71; the sequence is YIAFFSITQLMLLITMGLIAV. Over 72-93 the chain is Extracellular; that stretch reads DMFMPWGRWDSTTCQSLIYLHR. C85 and C172 are disulfide-bonded. A helical transmembrane segment spans residues 94 to 114; sequence LLRGLTFCATCLLNVLWTITL. Topologically, residues 115–134 are cytoplasmic; it reads SPRSSCLTKFKHKSPHHISG. The helical transmembrane segment at 135–155 threads the bilayer; that stretch reads AFLFFCVLYMSFSSHLLVSII. Topologically, residues 156 to 193 are extracellular; that stretch reads ATFNSTSDNFLYVTQSCSILPVSYSRTSILSTMMTMRE. N-linked (GlcNAc...) asparagine glycosylation occurs at N159. Residues 194–214 traverse the membrane as a helical segment; that stretch reads AFLIGLMALSSGYVVVLLWRH. Topologically, residues 215–237 are cytoplasmic; sequence KKQARHLHSTSLSSKASPEQRAT. A helical membrane pass occupies residues 238–258; sequence STIMLLMGFFVVLYILDTVIF. Topologically, residues 259 to 269 are extracellular; that stretch reads QARLKFKDVST. Residues 270 to 290 traverse the membrane as a helical segment; sequence FFCVKIIISHSYATFSPFVFI. At 291–310 the chain is on the cytoplasmic side; that stretch reads CNDKYMIKFVTSMCGRIVNV.

Belongs to the G-protein coupled receptor 1 family. Expressed in a subset of sensory neurons located in the apical layer of the vomeronasal organ.

The protein localises to the cell membrane. Its function is as follows. Putative pheromone receptor implicated in the regulation of social and reproductive behavior. This chain is Vomeronasal type-1 receptor 50 (Vmn1r50), found in Mus musculus (Mouse).